A 156-amino-acid polypeptide reads, in one-letter code: Small ribosomal subunit protein uS7 (156 aa).

Belongs to the universal ribosomal protein uS7 family. In terms of assembly, part of the 30S ribosomal subunit. Contacts proteins S9 and S11.

In terms of biological role, one of the primary rRNA binding proteins, it binds directly to 16S rRNA where it nucleates assembly of the head domain of the 30S subunit. Is located at the subunit interface close to the decoding center, probably blocks exit of the E-site tRNA. The chain is Small ribosomal subunit protein uS7 from Aeromonas hydrophila subsp. hydrophila (strain ATCC 7966 / DSM 30187 / BCRC 13018 / CCUG 14551 / JCM 1027 / KCTC 2358 / NCIMB 9240 / NCTC 8049).